Reading from the N-terminus, the 916-residue chain is DNA topoisomerase 1 alpha (916 aa).

A disordered region spans residues 1 to 369; the sequence is MGTETVSKPV…SSPSSGDGQK (369 aa). Low complexity predominate over residues 34-47; that stretch reads SNSNQSKSNSQRSK. Over residues 60 to 76 the composition is skewed to polar residues; it reads PVTSPNGTTPSNKTSIV. Residues 77 to 93 are compositionally biased toward low complexity; the sequence is KSSMPSSSSKASPAKSP. The span at 102–119 shows a compositional bias: basic and acidic residues; sequence VKDRSQLQKDQSECKIEH. The span at 130 to 148 shows a compositional bias: polar residues; that stretch reads SILSGNKGPTSSRQVSSPQ. Residues 149 to 168 are compositionally biased toward basic and acidic residues; sequence PEKKNNGDRPLDRASRIIKD. Ser-170 is subject to Phosphoserine. A compositionally biased stretch (polar residues) spans 230–239; it reads KNSSADQSSL. Over residues 253–267 the composition is skewed to basic and acidic residues; that stretch reads MKQDSVKKEIDDKGR. Residues 285–294 show a composition bias toward acidic residues; it reads GTDDDDDDDV. Residue Thr-286 is modified to Phosphothreonine. Positions 354–366 are enriched in low complexity; sequence YSTSSKSSPSSGD. Interaction with DNA regions lie at residues 577 to 578, 640 to 645, and 731 to 733; these read KY, RAGNEK, and TAK. The region spanning 584–914 is the Topo IB-type catalytic domain; the sequence is GSSLKGLSDK…MDVEPEYRFS (331 aa). Residues 778–860 adopt a coiled-coil conformation; sequence QRTVSKTHGA…ERDMHTKEDL (83 aa). The active-site O-(3'-phospho-DNA)-tyrosine intermediate is the Tyr-872.

The protein belongs to the type IB topoisomerase family. In terms of assembly, interacts with DEK3. In terms of tissue distribution, expressed in inflorescence meristems. Expressed in primordia of sepals, petals, stamens, carpels and ovules. Expressed in midstage embryos.

Its subcellular location is the nucleus. The catalysed reaction is ATP-independent breakage of single-stranded DNA, followed by passage and rejoining.. Releases the supercoiling and torsional tension of DNA introduced during the DNA replication and transcription by transiently cleaving and rejoining one strand of the DNA duplex. Introduces a single-strand break via transesterification at a target site in duplex DNA. The scissile phosphodiester is attacked by the catalytic tyrosine of the enzyme, resulting in the formation of a DNA-(3'-phosphotyrosyl)-enzyme intermediate and the expulsion of a 5'-OH DNA strand. The free DNA strand then rotates around the intact phosphodiester bond on the opposing strand, thus removing DNA supercoils. Finally, in the religation step, the DNA 5'-OH attacks the covalent intermediate to expel the active-site tyrosine and restore the DNA phosphodiester backbone. Can complement a TOP1-deficient yeast mutant. Plays a critical role in the maintenance of a regular pattern of organ initiation. Topoisomerases I enzymes (TOP1A and TOP1B) are essential for plant survival. Functions together with the stem cell maintenance gene WUSCHEL (WUS) in stem cell regulation. Required to maintain developmentally regulated gene repression. Functions synergistically with chromatin remodeling factors. Is required for the repression of WUS expression in flower development. Plays a role in polycomb group (PcG) protein-mediated histone H3 trimethylation on 'Lys-27' (H3K27me3) at the WUS gene locus. H3K27me3 induces transcriptional repression of WUS. May assist AGAMOUS (AG) in recruiting PcG proteins to WUS locus. Reduces nucleosome density, especially at genes that are targets of PcG proteins. Plays a role in epigenetic silencing. Involved in RNA-directed DNA methylation (RdDM) by promoting Pol V transcription to generate long non-coding RNA transcripts. Is dispensable for Pol IV-mediated small interfering RNA (siRNA) biogenesis. Promotes transposable element (TE) silencing at endogenous RdDM target loci through histone H3 dimethylation of 'Lys-9' (H3K9me2). Promotes the production of Pol V-dependent long non-coding transcripts that facilitate the recruitment of siRNA-AGO4 and AGO4 occupancy at TEs. The protein is DNA topoisomerase 1 alpha of Arabidopsis thaliana (Mouse-ear cress).